The primary structure comprises 233 residues: Octanoyltransferase (233 aa).

The 176-residue stretch at 36-211 (DTTPDEIWLV…EFTRQLGYPT (176 aa)) folds into the BPL/LPL catalytic domain. Substrate contacts are provided by residues 75–82 (RGGQVTYH), 142–144 (SLG), and 155–157 (GLA). The active-site Acyl-thioester intermediate is the cysteine 173.

It belongs to the LipB family.

It localises to the cytoplasm. The catalysed reaction is octanoyl-[ACP] + L-lysyl-[protein] = N(6)-octanoyl-L-lysyl-[protein] + holo-[ACP] + H(+). It participates in protein modification; protein lipoylation via endogenous pathway; protein N(6)-(lipoyl)lysine from octanoyl-[acyl-carrier-protein]: step 1/2. Catalyzes the transfer of endogenously produced octanoic acid from octanoyl-acyl-carrier-protein onto the lipoyl domains of lipoate-dependent enzymes. Lipoyl-ACP can also act as a substrate although octanoyl-ACP is likely to be the physiological substrate. The chain is Octanoyltransferase from Yersinia pseudotuberculosis serotype O:3 (strain YPIII).